The chain runs to 657 residues: 1-deoxy-D-xylulose-5-phosphate synthase (657 aa).

Thiamine diphosphate contacts are provided by residues H73 and 113 to 115 (SHA). D145 serves as a coordination point for Mg(2+). Thiamine diphosphate is bound by residues 146–147 (GA), N175, Y293, and E375. Residue N175 coordinates Mg(2+).

The protein belongs to the transketolase family. DXPS subfamily. Homodimer. It depends on Mg(2+) as a cofactor. Requires thiamine diphosphate as cofactor.

The catalysed reaction is D-glyceraldehyde 3-phosphate + pyruvate + H(+) = 1-deoxy-D-xylulose 5-phosphate + CO2. The protein operates within metabolic intermediate biosynthesis; 1-deoxy-D-xylulose 5-phosphate biosynthesis; 1-deoxy-D-xylulose 5-phosphate from D-glyceraldehyde 3-phosphate and pyruvate: step 1/1. Functionally, catalyzes the acyloin condensation reaction between C atoms 2 and 3 of pyruvate and glyceraldehyde 3-phosphate to yield 1-deoxy-D-xylulose-5-phosphate (DXP). The polypeptide is 1-deoxy-D-xylulose-5-phosphate synthase (Pseudarthrobacter chlorophenolicus (strain ATCC 700700 / DSM 12829 / CIP 107037 / JCM 12360 / KCTC 9906 / NCIMB 13794 / A6) (Arthrobacter chlorophenolicus)).